Reading from the N-terminus, the 702-residue chain is Archaeal Lon protease (702 aa).

The segment at 1-63 (MSNESTNDAP…VGVEGDVSID (63 aa)) is disordered. At 1–183 (MSNESTNDAP…EARKRNQMRS (183 aa)) the chain is on the cytoplasmic side. A compositionally biased stretch (acidic residues) spans 10-48 (PPDDDPDDPEPSVDHDDTDGLQDDPADSVDDAGEVDDLE). 117–124 (GSPGTGKS) is a binding site for ATP. A helical transmembrane segment spans residues 184 to 201 (FLMWIMILLAVGYALLIA). The Extracellular portion of the chain corresponds to 202–206 (TPARP). A helical transmembrane segment spans residues 207–223 (LLALLSAAGIYLLFRYT). Residues 224 to 702 (NRGSDAMVPK…GTTGGNPSPQ (479 aa)) lie on the Cytoplasmic side of the membrane. The 181-residue stretch at 487–667 (EEAVGRVNGL…SEVLDVALVG (181 aa)) folds into the Lon proteolytic domain. Residues serine 574 and lysine 617 contribute to the active site.

This sequence belongs to the peptidase S16 family. Archaeal LonB subfamily. As to quaternary structure, homohexamer. Organized in a ring with a central cavity.

It localises to the cell membrane. Its function is as follows. ATP-dependent serine protease that mediates the selective degradation of mutant and abnormal proteins as well as certain short-lived regulatory proteins. Degrades polypeptides processively. The chain is Archaeal Lon protease from Halobacterium salinarum (strain ATCC 700922 / JCM 11081 / NRC-1) (Halobacterium halobium).